A 75-amino-acid polypeptide reads, in one-letter code: Putative membrane protein insertion efficiency factor (75 aa).

This sequence belongs to the UPF0161 family.

Its subcellular location is the cell inner membrane. Could be involved in insertion of integral membrane proteins into the membrane. The chain is Putative membrane protein insertion efficiency factor from Gloeothece citriformis (strain PCC 7424) (Cyanothece sp. (strain PCC 7424)).